An 87-amino-acid chain; its full sequence is DNA-directed RNA polymerase subunit Rpo5 (87 aa).

Belongs to the archaeal Rpo5/eukaryotic RPB5 RNA polymerase subunit family. In terms of assembly, part of the RNA polymerase complex.

Its subcellular location is the cytoplasm. It carries out the reaction RNA(n) + a ribonucleoside 5'-triphosphate = RNA(n+1) + diphosphate. DNA-dependent RNA polymerase (RNAP) catalyzes the transcription of DNA into RNA using the four ribonucleoside triphosphates as substrates. The protein is DNA-directed RNA polymerase subunit Rpo5 of Thermoplasma volcanium (strain ATCC 51530 / DSM 4299 / JCM 9571 / NBRC 15438 / GSS1).